The sequence spans 146 residues: uncharacterized protein (146 aa).

Residues 7–27 (FVLSITIVLVILIIIAFIWYN) traverse the membrane as a helical segment.

This sequence belongs to the asfivirus E146L family.

It is found in the host membrane. It localises to the virion. This is an uncharacterized protein from African swine fever virus (strain Badajoz 1971 Vero-adapted) (Ba71V).